The primary structure comprises 65 residues: Lantipeptide Flvbeta.h (65 aa).

The propeptide at 1–27 (MERYGHLAGVIPVDEIDDMFESNVIGG) is cleaved by FlvT. Thr28 is subject to 2,3-didehydrobutyrine; by FlvM2. A cross-link (lanthionine (Ser-Cys); by FlvM2) is located at residues 29–33 (SSIDC). At Ser30 the chain carries 2,3-didehydroalanine (Ser); by FlvM2. Position 44 is a 2,3-didehydrobutyrine; by FlvM2 (Thr44). The segment at residues 48–54 (TVRIEFC) is a cross-link (beta-methyllanthionine (Thr-Cys); by FlvM2). Positions 56 to 59 (SAAC) form a cross-link, lanthionine (Ser-Cys); by FlvM2. The beta-methyllanthionine (Thr-Cys); by FlvM2 cross-link spans 60-63 (TYSC).

Post-translationally, contains LL-lanthionine, DL-lanthionine, and DL-beta-methyllanthionine, when coepressed in E.coli with the flavecin synthetase FlvM2.

Its subcellular location is the secreted. Its function is as follows. Lanthionine-containing peptide that does probably not show antibacterial activity, since its analog [+2]Flvbeta.h does not show antibacterial activity against M.luteus. Also does not show antibiotic activity when tested with [Del2]Flvalpha.a, an analog of Flvalpha.a, which is encoded by the same operon than Flvbeta.h. The bactericidal activity of lantibiotics is based on depolarization of energized bacterial cytoplasmic membranes, initiated by the formation of aqueous transmembrane pores. In Ruminococcus flavefaciens, this protein is Lantipeptide Flvbeta.h.